The sequence spans 141 residues: MTDKMGTDLTSFRGNLNGLYEAIKVQTALQKEAKTIKREQKKIKDEIDTFKTAILEDLKQRDQEGVEFKGLKITIHPKPKRVYFKKADKERLICEALRNCGIEDAQSKTKNVIDAISQIHTETEDTLKIIDSKKEKKVNKY.

The stretch at 24 to 52 forms a coiled coil; that stretch reads KVQTALQKEAKTIKREQKKIKDEIDTFKT.

This is an uncharacterized protein from Invertebrate iridescent virus 6 (IIV-6).